We begin with the raw amino-acid sequence, 121 residues long: Small ribosomal subunit protein uS13 (121 aa).

Positions 91-121 are disordered; it reads HRRGLPVRGQNTKNNARTRKGPRKTVANKKK. The span at 106–121 shows a compositional bias: basic residues; it reads ARTRKGPRKTVANKKK.

It belongs to the universal ribosomal protein uS13 family. Part of the 30S ribosomal subunit. Forms a loose heterodimer with protein S19. Forms two bridges to the 50S subunit in the 70S ribosome.

Functionally, located at the top of the head of the 30S subunit, it contacts several helices of the 16S rRNA. In the 70S ribosome it contacts the 23S rRNA (bridge B1a) and protein L5 of the 50S subunit (bridge B1b), connecting the 2 subunits; these bridges are implicated in subunit movement. Contacts the tRNAs in the A and P-sites. The chain is Small ribosomal subunit protein uS13 from Lysinibacillus sphaericus (strain C3-41).